The chain runs to 244 residues: tRNA pseudouridine synthase A (244 aa).

Asp-52 functions as the Nucleophile in the catalytic mechanism. Tyr-110 is a substrate binding site.

This sequence belongs to the tRNA pseudouridine synthase TruA family. Homodimer.

It carries out the reaction uridine(38/39/40) in tRNA = pseudouridine(38/39/40) in tRNA. Functionally, formation of pseudouridine at positions 38, 39 and 40 in the anticodon stem and loop of transfer RNAs. The chain is tRNA pseudouridine synthase A from Clostridium kluyveri (strain ATCC 8527 / DSM 555 / NBRC 12016 / NCIMB 10680 / K1).